A 503-amino-acid polypeptide reads, in one-letter code: Maturase K (503 aa).

The protein belongs to the intron maturase 2 family. MatK subfamily.

It is found in the plastid. The protein localises to the chloroplast. In terms of biological role, usually encoded in the trnK tRNA gene intron. Probably assists in splicing its own and other chloroplast group II introns. The sequence is that of Maturase K from Rosa gigantea (Giant tea rose).